A 199-amino-acid polypeptide reads, in one-letter code: Recombination protein RecR (199 aa).

Residues 57–72 form a C4-type zinc finger; the sequence is CEICGNLDTKSICHIC. One can recognise a Toprim domain in the interval 80–175; the sequence is STIAIVETVA…KISRLASGIP (96 aa).

It belongs to the RecR family.

May play a role in DNA repair. It seems to be involved in an RecBC-independent recombinational process of DNA repair. It may act with RecF and RecO. The sequence is that of Recombination protein RecR from Rickettsia prowazekii (strain Madrid E).